Reading from the N-terminus, the 131-residue chain is Phosphoribosyl-AMP cyclohydrolase (131 aa).

Asp-78 provides a ligand contact to Mg(2+). Cys-79 contacts Zn(2+). Mg(2+) is bound by residues Asp-80 and Asp-82. The Zn(2+) site is built by Cys-96 and Cys-103.

It belongs to the PRA-CH family. In terms of assembly, homodimer. Mg(2+) serves as cofactor. Requires Zn(2+) as cofactor.

Its subcellular location is the cytoplasm. The enzyme catalyses 1-(5-phospho-beta-D-ribosyl)-5'-AMP + H2O = 1-(5-phospho-beta-D-ribosyl)-5-[(5-phospho-beta-D-ribosylamino)methylideneamino]imidazole-4-carboxamide. Its pathway is amino-acid biosynthesis; L-histidine biosynthesis; L-histidine from 5-phospho-alpha-D-ribose 1-diphosphate: step 3/9. In terms of biological role, catalyzes the hydrolysis of the adenine ring of phosphoribosyl-AMP. The chain is Phosphoribosyl-AMP cyclohydrolase from Neisseria meningitidis serogroup A / serotype 4A (strain DSM 15465 / Z2491).